Here is a 554-residue protein sequence, read N- to C-terminus: Inactive serine/threonine-protein kinase/endoribonuclease IRE1-like (554 aa).

The N-terminal stretch at 1-17 (MWLLAISLVGLLVVVVC) is a signal peptide. A disordered region spans residues 36–85 (KRDKNSAPRVSASGEDGTKNEQVEKKSDPSGGLGEENEKTNSESKVLSVP). The segment covering 51-63 (DGTKNEQVEKKSD) has biased composition (basic and acidic residues). Positions 121–408 (LVSTNEMKYG…ATQVLLHPLF (288 aa)) constitute a Protein kinase domain. Position 150 (Lys150) interacts with ATP. Positions 411-554 (SEKRLFFLRE…GEEAFEKYFN (144 aa)) constitute a KEN domain.

Belongs to the protein kinase superfamily. Ser/Thr protein kinase family.

In Arabidopsis thaliana (Mouse-ear cress), this protein is Inactive serine/threonine-protein kinase/endoribonuclease IRE1-like.